A 900-amino-acid chain; its full sequence is Sterol regulatory element-binding protein 1 (900 aa).

Residues M1–A16 show a composition bias toward low complexity. 2 disordered regions span residues M1–S49 and T206–T263. The tract at residues M1–P440 is nuclear form of sre1; complements deletions of sre1 or scp1. Topologically, residues M1 to T442 are cytoplasmic. Polar residues predominate over residues T21–S32. Residues A35–S49 are compositionally biased toward low complexity. In terms of domain architecture, bHLH spans P260–L332. Residues G443–L463 traverse the membrane as a helical segment. The Lumenal segment spans residues H464 to S509. Residues T510–T530 form a helical membrane-spanning segment. Residues H531–A900 are Cytoplasmic-facing. A phosphoserine mark is found at S898 and S899.

As to quaternary structure, forms a tight complex with scp1, composed of 4 copies of scp1 and 4 copies of sre1, which protects sre1 precursor from degradation by the proteasome. In low oxygen or sterol conditions, undergoes proteolytic cleavage by rhomboid-type protease rbd2 and is released as soluble transcription factor from the membrane. In terms of processing, processed form is phosphorylated.

The protein resides in the endoplasmic reticulum membrane. It is found in the nucleus. Precursor of the transcription factor form (Processed sterol regulatory element-binding protein 1), which is embedded in the endoplasmic reticulum membrane. Low oxygen or sterol conditions promote processing of this form, releasing the transcription factor form that translocates into the nucleus and activates transcription of genes required for adaptation to anaerobic growth. Its function is as follows. Transcriptional activator required for transcription of genes required for adaptation to anaerobic growth like those implicated in the nonrespiratory oxygen-consumptive biosynthetic pathways of sterol, heme, sphingolipid, and ubiquinone biosynthesis. May monitor oxygen levels through sterol synthesis steps which require oxygen. The protein is Sterol regulatory element-binding protein 1 of Schizosaccharomyces pombe (strain 972 / ATCC 24843) (Fission yeast).